Here is a 98-residue protein sequence, read N- to C-terminus: Large ribosomal subunit protein uL23 (98 aa).

It belongs to the universal ribosomal protein uL23 family. In terms of assembly, part of the 50S ribosomal subunit. Contacts protein L29, and trigger factor when it is bound to the ribosome.

One of the early assembly proteins it binds 23S rRNA. One of the proteins that surrounds the polypeptide exit tunnel on the outside of the ribosome. Forms the main docking site for trigger factor binding to the ribosome. The chain is Large ribosomal subunit protein uL23 from Gluconacetobacter diazotrophicus (strain ATCC 49037 / DSM 5601 / CCUG 37298 / CIP 103539 / LMG 7603 / PAl5).